A 203-amino-acid chain; its full sequence is UPF0637 protein Sca_0732 (203 aa).

Belongs to the UPF0637 family.

This chain is UPF0637 protein Sca_0732, found in Staphylococcus carnosus (strain TM300).